The chain runs to 306 residues: Myb family transcription factor MOF1 (306 aa).

One can recognise an HTH myb-type domain in the interval 19–79 (RSKVPRLRWT…HLQMYRCSRL (61 aa)). A DNA-binding region (H-T-H motif) is located at residues 50 to 75 (PKLILQLMGVKGLTISHVKSHLQMYR).

In terms of assembly, interacts with TPR1, TPR2 and TPR3. As to expression, expressed in roots, leaves, leaf sheaths, culms, panicles, lemmas, paleas, lodicules, stamens, and pistils.

It is found in the nucleus. In terms of biological role, transcriptional repressor that plays a role in the regulation of organ identity and spikelet meristem determinacy. Interacts with the TPR corepressors to possibly repress the expression of downstream target genes. The protein is Myb family transcription factor MOF1 of Oryza sativa subsp. japonica (Rice).